The primary structure comprises 453 residues: GPPGPPGAPGKALKGDIPDPGLPGDQGPPGPDGPRGVPGPPGPPGSVDLLKGEPGDCGLPGPPGLPGPPGPPGHKGFPGCDGKHGQKGPMGFPGPQGPPGSPGPPGDKGLPGPPGRRGPLGPPGSRGEPGPPADLDACPRIPGLPGVPGPRGPEGTMGLPGMRGPPGPGCKGEPGLDGRRGEDGLPGSPGPPGHKGDMGEAGCPGAPGPPGPMGDPGPIGFGPGYLSGFLLVLHSQTDGEPTCPMGMPRLWTGYSLLYLEGQERAHNQDLGLAGSCLPIFSTLPFAYCNIHQVCHYARRNDRSYWLASTAPLPMTPLSEDEIRPYISRCAVCEAPAQAVAVHSQDQSIPPCPRAWRSLWIGYSFLMHTGAGDQGGGQALMSPGSCLEDFRAAPFLECQGRQGTCHFFANKYSFWLTTVRPDLQFSSAPLPDTLKESHAQRQKISRCQVCVKHS.

A disordered region spans residues 1-218 (GPPGPPGAPG…PPGPMGDPGP (218 aa)). Residues 1–222 (GPPGPPGAPG…MGDPGPIGFG (222 aa)) form a triple-helical region region. Composition is skewed to pro residues over residues 26 to 44 (QGPP…PGPP), 60 to 72 (PGPP…PGPP), and 95 to 122 (PQGP…PLGP). Residues 153–162 (PEGTMGLPGM) show a composition bias toward low complexity. Residues 174–183 (PGLDGRRGED) are compositionally biased toward basic and acidic residues. The segment covering 206–215 (APGPPGPMGD) has biased composition (pro residues). Residues 228-453 (GFLLVLHSQT…SRCQVCVKHS (226 aa)) form the Collagen IV NC1 domain. Intrachain disulfides connect cysteine 243–cysteine 332, cysteine 276–cysteine 329, cysteine 288–cysteine 294, cysteine 351–cysteine 449, cysteine 385–cysteine 446, and cysteine 397–cysteine 404.

The protein belongs to the type IV collagen family. As to quaternary structure, there are six type IV collagen isoforms, alpha 1(IV)-alpha 6(IV), each of which can form a triple helix structure with 2 other chains to generate type IV collagen network. The alpha 3(IV) chain forms a triple helical protomer with alpha 4(IV) and alpha 5(IV); this triple helical structure dimerizes through NC1-NC1 domain interactions such that the alpha 3(IV), alpha 4(IV) and alpha 5(IV) chains of one protomer connect with the alpha 5(IV), alpha 4(IV) and alpha 3(IV) chains of the opposite protomer, respectively. Associates with LAMB2 at the neuromuscular junction and in GBM. Prolines at the third position of the tripeptide repeating unit (G-X-Y) are hydroxylated in some or all of the chains. In terms of processing, type IV collagens contain numerous cysteine residues which are involved in inter- and intramolecular disulfide bonding. 12 of these, located in the NC1 domain, are conserved in all known type IV collagens. Post-translationally, the trimeric structure of the NC1 domains is stabilized by covalent bonds between Lys and Met residues. As to expression, alpha 3 and alpha 4 type IV collagens are colocalized and present only in basement membranes of kidney, eye, cochlea, lung and brain.

The protein localises to the secreted. It localises to the extracellular space. It is found in the extracellular matrix. Its subcellular location is the basement membrane. In terms of biological role, type IV collagen is the major structural component of glomerular basement membranes (GBM), forming a 'chicken-wire' meshwork together with laminins, proteoglycans and entactin/nidogen. This is Collagen alpha-4(IV) chain (COL4A4) from Bos taurus (Bovine).